The sequence spans 141 residues: Hemoglobin subunit alpha-2 (141 aa).

In terms of domain architecture, Globin spans 1 to 141 (VLTDAERKEV…VATVLTSKYR (141 aa)). H58 serves as a coordination point for O2. H87 serves as a coordination point for heme b.

This sequence belongs to the globin family. Heterotetramer of two alpha chains and two beta chains. As to expression, red blood cells.

Involved in oxygen transport from the lung to the various peripheral tissues. This is Hemoglobin subunit alpha-2 from Tachyglossus aculeatus aculeatus (Southeast Australian short-beaked echidna).